The sequence spans 215 residues: MNELTAFNEQRAEIYWWLSSLLSAELTTEQLEQYGSFEVRTFLSNLAETPELSDSVNALIEKLNAVQGREDAQLELSADFCDAFLGSDKSSALPYASMYLDKSGLLNAKPAQDMREWLTKYNIAQKAEFNEPADHIAIELDFLGNLIVMTNQQVSEDEFEAYMSAQLTFINEQLLSWTPRFNEICIERDKFGFYAAVTGLLVTFLKLDVKFLAGE.

Belongs to the TorD/DmsD family. TorD subfamily.

It is found in the cytoplasm. Functionally, involved in the biogenesis of TorA. Acts on TorA before the insertion of the molybdenum cofactor and, as a result, probably favors a conformation of the apoenzyme that is competent for acquiring the cofactor. This is Chaperone protein TorD from Aliivibrio fischeri (strain ATCC 700601 / ES114) (Vibrio fischeri).